The sequence spans 478 residues: Putrescine oxidase (478 aa).

15–70 serves as a coordination point for FAD; that stretch reads RDVVVVGAGPAGLMAARTLVAAGRTVAVLEARDRVGGRTWSKTVDGAFLEIGGQWI.

It belongs to the flavin monoamine oxidase family. It depends on FAD as a cofactor.

The catalysed reaction is putrescine + O2 + H2O = 4-aminobutanal + H2O2 + NH4(+). The chain is Putrescine oxidase (puo) from Kocuria rosea (Deinococcus erythromyxa).